We begin with the raw amino-acid sequence, 231 residues long: Cytidylate kinase (231 aa).

17-25 (GPTASGKGT) contributes to the ATP binding site.

It belongs to the cytidylate kinase family. Type 1 subfamily.

Its subcellular location is the cytoplasm. The catalysed reaction is CMP + ATP = CDP + ADP. The enzyme catalyses dCMP + ATP = dCDP + ADP. This is Cytidylate kinase from Ralstonia pickettii (strain 12J).